The sequence spans 464 residues: Soluble pyridine nucleotide transhydrogenase (464 aa).

Residue 35–44 (DSRRQVGGNC) coordinates FAD.

Belongs to the class-I pyridine nucleotide-disulfide oxidoreductase family. It depends on FAD as a cofactor.

The protein localises to the cytoplasm. The catalysed reaction is NAD(+) + NADPH = NADH + NADP(+). Conversion of NADPH, generated by peripheral catabolic pathways, to NADH, which can enter the respiratory chain for energy generation. This Pseudomonas entomophila (strain L48) protein is Soluble pyridine nucleotide transhydrogenase.